We begin with the raw amino-acid sequence, 220 residues long: Orotidine 5'-phosphate decarboxylase (220 aa).

Substrate is bound by residues Asp12, Lys34, 60 to 69 (DFKVADIPNT), Ser117, 170 to 180 (PGVGAQGGKAS), Gly193, and Arg194. Catalysis depends on Lys62, which acts as the Proton donor.

This sequence belongs to the OMP decarboxylase family. Type 1 subfamily. In terms of assembly, homodimer.

It catalyses the reaction orotidine 5'-phosphate + H(+) = UMP + CO2. Its pathway is pyrimidine metabolism; UMP biosynthesis via de novo pathway; UMP from orotate: step 2/2. Functionally, catalyzes the decarboxylation of orotidine 5'-monophosphate (OMP) to uridine 5'-monophosphate (UMP). This chain is Orotidine 5'-phosphate decarboxylase, found in Methanosarcina mazei (strain ATCC BAA-159 / DSM 3647 / Goe1 / Go1 / JCM 11833 / OCM 88) (Methanosarcina frisia).